Reading from the N-terminus, the 340-residue chain is MAVQMEYEKDVKVPALDGKKIAVIGYGSQGHAHSQNLRDTGHDVIIGVRPGKSFDKAKEDGFDTYTVAEATKLADVIMILAPDEIQQELYEAEIAPNLEAGNAVGFAHGFNIHFEFIKVPADVDVFMCAPKGPGHLVRRTFEEGFGVPALYAVYQDATGNAKDIAMDWCKGIGAARVGLLETTYKEETEEDLFGEQAVLCGGLTALIETGFEVLTEAGYAPELAYFEVLHEMKLIVDLIYEGGFKKMRQSISNTAEFGDYVSGPRVITEQVKENMKAVLADIQNGKFANDFVNDYKAGRPKLTAYREEAANLEIEKVGAELRKAMPFVGQNDDDAFKIYN.

A KARI N-terminal Rossmann domain is found at 3-182 (VQMEYEKDVK…GAARVGLLET (180 aa)). NADP(+) is bound by residues 26–29 (YGSQ), arginine 49, serine 53, and 83–86 (DEIQ). Histidine 108 is an active-site residue. NADP(+) is bound at residue glycine 134. A KARI C-terminal knotted domain is found at 183 to 328 (TYKEETEEDL…AELRKAMPFV (146 aa)). Mg(2+) contacts are provided by aspartate 191, glutamate 195, glutamate 227, and glutamate 231. Residue serine 252 coordinates substrate.

Belongs to the ketol-acid reductoisomerase family. Requires Mg(2+) as cofactor.

It catalyses the reaction (2R)-2,3-dihydroxy-3-methylbutanoate + NADP(+) = (2S)-2-acetolactate + NADPH + H(+). The enzyme catalyses (2R,3R)-2,3-dihydroxy-3-methylpentanoate + NADP(+) = (S)-2-ethyl-2-hydroxy-3-oxobutanoate + NADPH + H(+). The protein operates within amino-acid biosynthesis; L-isoleucine biosynthesis; L-isoleucine from 2-oxobutanoate: step 2/4. Its pathway is amino-acid biosynthesis; L-valine biosynthesis; L-valine from pyruvate: step 2/4. Its function is as follows. Involved in the biosynthesis of branched-chain amino acids (BCAA). Catalyzes an alkyl-migration followed by a ketol-acid reduction of (S)-2-acetolactate (S2AL) to yield (R)-2,3-dihydroxy-isovalerate. In the isomerase reaction, S2AL is rearranged via a Mg-dependent methyl migration to produce 3-hydroxy-3-methyl-2-ketobutyrate (HMKB). In the reductase reaction, this 2-ketoacid undergoes a metal-dependent reduction by NADPH to yield (R)-2,3-dihydroxy-isovalerate. The sequence is that of Ketol-acid reductoisomerase (NADP(+)) from Streptococcus thermophilus (strain ATCC BAA-491 / LMD-9).